The following is a 132-amino-acid chain: Large ribosomal subunit protein bL12 (132 aa).

Residues 100 to 126 are compositionally biased toward basic and acidic residues; it reads ESTPKPVKEGASKEDAEAAKKELEEAG. The disordered stretch occupies residues 100-132; it reads ESTPKPVKEGASKEDAEAAKKELEEAGAKVSIK.

This sequence belongs to the bacterial ribosomal protein bL12 family. In terms of assembly, homodimer. Part of the ribosomal stalk of the 50S ribosomal subunit. Forms a multimeric L10(L12)X complex, where L10 forms an elongated spine to which 2 to 4 L12 dimers bind in a sequential fashion. Binds GTP-bound translation factors.

Forms part of the ribosomal stalk which helps the ribosome interact with GTP-bound translation factors. Is thus essential for accurate translation. The chain is Large ribosomal subunit protein bL12 from Thermosynechococcus vestitus (strain NIES-2133 / IAM M-273 / BP-1).